A 519-amino-acid chain; its full sequence is Histidine--tRNA ligase (519 aa).

The protein belongs to the class-II aminoacyl-tRNA synthetase family. Homodimer.

It is found in the cytoplasm. It carries out the reaction tRNA(His) + L-histidine + ATP = L-histidyl-tRNA(His) + AMP + diphosphate + H(+). The polypeptide is Histidine--tRNA ligase (Roseobacter denitrificans (strain ATCC 33942 / OCh 114) (Erythrobacter sp. (strain OCh 114))).